The following is a 589-amino-acid chain: Parathyroid hormone/parathyroid hormone-related peptide receptor (589 aa).

Residues 1–28 (MGAARIAPGLALLLCCPVLSSAYALVDA) form the signal peptide. The Extracellular segment spans residues 29 to 188 (DDVMTKEEQI…REREVFDRLG (160 aa)). Disulfide bonds link Cys48-Cys117, Cys108-Cys148, and Cys131-Cys170. Residues 64–105 (ESDKGWASASTSGKPKKEKPSGKLHPESEEDKEVPTGSRPRG) form a disordered region. Residues 81–90 (EKPSGKLHPE) show a composition bias toward basic and acidic residues. Asn151, Asn161, Asn166, and Asn176 each carry an N-linked (GlcNAc...) asparagine glycan. The chain crosses the membrane as a helical span at residues 189 to 209 (MIYTVGYSVSLASLTVAVLIL). The Cytoplasmic segment spans residues 210-223 (AYFRRLHCTRNYIH). A helical membrane pass occupies residues 224-244 (MHLFLSFMLRAVSIFVKDAVL). Residues 245–294 (YSGTALDEAERLTEEELRAIAQAPPPPAAAAGYVGCRVAVTFFLYFLATN) lie on the Extracellular side of the membrane. The chain crosses the membrane as a helical span at residues 295–315 (YYWILVEGLYLHSLIFMAFFS). At 316-318 (EKK) the chain is on the cytoplasmic side. The helical transmembrane segment at 319–339 (YLWGFTVFGWGLPAIFVAVWV) threads the bilayer. The Extracellular portion of the chain corresponds to 340–360 (SVRATLANTGCWDLSSGNKKW). A helical membrane pass occupies residues 361-381 (IIQVPILASIVLNFILFINIV). At 382 to 404 (RVLATKLRETNAGRCDTRQQYRK) the chain is on the cytoplasmic side. A helical membrane pass occupies residues 405 to 425 (LLKSTLVLMPLFGVHYIVFMA). Topologically, residues 426–439 (TPYTEVSGTLWQVQ) are extracellular. A helical membrane pass occupies residues 440–460 (MHYEMLFNSFQGFFVAIIYCF). Topologically, residues 461–589 (CNGEVQAEIK…LLQEEWETVM (129 aa)) are cytoplasmic. The short motif at 473 to 476 (WSRW) is the Important for interaction with G proteins element. The interval 524 to 549 (AATTNGHPPLPGHTKSGSPALQATPP) is disordered. Phosphothreonine is present on Thr547.

It belongs to the G-protein coupled receptor 2 family. Homodimer in the absence of bound ligand. Peptide hormone binding leads to dissociation of the homodimer. N-glycosylated.

It is found in the cell membrane. Its function is as follows. G-protein-coupled receptor for parathyroid hormone (PTH) and for parathyroid hormone-related peptide (PTHLH). Ligand binding causes a conformation change that triggers signaling via guanine nucleotide-binding proteins (G proteins) and modulates the activity of downstream effectors, such as adenylate cyclase (cAMP). PTH1R is coupled to G(s) G alpha proteins and mediates activation of adenylate cyclase activity. PTHLH dissociates from PTH1R more rapidly than PTH; as consequence, the cAMP response induced by PTHLH decays faster than the response induced by PTH. This is Parathyroid hormone/parathyroid hormone-related peptide receptor (PTH1R) from Bos taurus (Bovine).